The sequence spans 340 residues: Phosphoribosylformylglycinamidine cyclo-ligase (340 aa).

The protein belongs to the AIR synthase family.

The protein resides in the cytoplasm. The enzyme catalyses 2-formamido-N(1)-(5-O-phospho-beta-D-ribosyl)acetamidine + ATP = 5-amino-1-(5-phospho-beta-D-ribosyl)imidazole + ADP + phosphate + H(+). It participates in purine metabolism; IMP biosynthesis via de novo pathway; 5-amino-1-(5-phospho-D-ribosyl)imidazole from N(2)-formyl-N(1)-(5-phospho-D-ribosyl)glycinamide: step 2/2. The polypeptide is Phosphoribosylformylglycinamidine cyclo-ligase (Streptococcus mutans serotype c (strain ATCC 700610 / UA159)).